Consider the following 227-residue polypeptide: Protein GrpE (227 aa).

Polar residues predominate over residues 1–18 (MTQGNQKTEGNPPEQVTV). 2 disordered regions span residues 1–57 (MTQG…GAAT) and 193–227 (TEEG…ASGD). Positions 19–35 (TDKRRIDPETGEVRHVP) are enriched in basic and acidic residues. Composition is skewed to low complexity over residues 41–50 (GGTAPQAATA) and 199–213 (EAAA…AAET).

This sequence belongs to the GrpE family. In terms of assembly, homodimer.

It localises to the cytoplasm. Participates actively in the response to hyperosmotic and heat shock by preventing the aggregation of stress-denatured proteins, in association with DnaK and GrpE. It is the nucleotide exchange factor for DnaK and may function as a thermosensor. Unfolded proteins bind initially to DnaJ; upon interaction with the DnaJ-bound protein, DnaK hydrolyzes its bound ATP, resulting in the formation of a stable complex. GrpE releases ADP from DnaK; ATP binding to DnaK triggers the release of the substrate protein, thus completing the reaction cycle. Several rounds of ATP-dependent interactions between DnaJ, DnaK and GrpE are required for fully efficient folding. The chain is Protein GrpE from Mycolicibacterium paratuberculosis (strain ATCC BAA-968 / K-10) (Mycobacterium paratuberculosis).